The chain runs to 381 residues: Creatine kinase B-type (381 aa).

The residue at position 4 (serine 4) is a Phosphoserine. Residues 11–98 form the Phosphagen kinase N-terminal domain; that stretch reads KLRFPAEDEF…FDPIIEDRHG (88 aa). Threonine 35 carries the phosphothreonine modification. Residue lysine 45 forms a Glycyl lysine isopeptide (Lys-Gly) (interchain with G-Cter in ubiquitin) linkage. Valine 72 lines the creatine pocket. Residues 96–110 are compositionally biased toward basic and acidic residues; it reads RHGGYKPSDEHKTDL. The tract at residues 96 to 123 is disordered; that stretch reads RHGGYKPSDEHKTDLNPDNLQGGDDLDP. Glycyl lysine isopeptide (Lys-Gly) (interchain with G-Cter in ubiquitin) cross-links involve residues lysine 101 and lysine 107. At tyrosine 125 the chain carries Phosphotyrosine. Residues 125-367 form the Phosphagen kinase C-terminal domain; the sequence is YVLSSRVRTG…KLLIEMEQRL (243 aa). Residues 128–132, arginine 130, arginine 132, and histidine 191 contribute to the ATP site; that span reads SSRVR. The interval 130-138 is internal MTS-like signal; it reads RVRTGRSIR. Serine 199 is modified (phosphoserine). Glutamate 232 is a creatine binding site. ATP is bound at residue arginine 236. Tyrosine 269 carries the 3'-nitrotyrosine modification. Position 285 (serine 285) interacts with creatine. An ATP-binding site is contributed by arginine 292. Position 309 is a phosphoserine (serine 309). Residues arginine 320, 320–325, and aspartate 335 each bind ATP; that span reads RGTGGV. Threonine 322 is subject to Phosphothreonine. Lysine 381 is covalently cross-linked (Glycyl lysine isopeptide (Lys-Gly) (interchain with G-Cter in ubiquitin)).

Belongs to the ATP:guanido phosphotransferase family. In terms of assembly, dimer of identical or non-identical chains, which can be either B (brain type) or M (muscle type). With MM being the major form in skeletal muscle and myocardium, MB existing in myocardium, and BB existing in many tissues, especially brain. Interacts with SLC12A6 (via C-terminus); the interaction may be required for SLC12A6 potassium-chloride cotransport activity. Post-translationally, ubiquitinated by the ECS(ASB9) complex, leading to its degradation by the proteasome.

It is found in the cytoplasm. The protein localises to the cytosol. Its subcellular location is the mitochondrion. It localises to the cell membrane. It catalyses the reaction creatine + ATP = N-phosphocreatine + ADP + H(+). Its function is as follows. Reversibly catalyzes the transfer of phosphate between ATP and various phosphogens (e.g. creatine phosphate). Creatine kinase isoenzymes play a central role in energy transduction in tissues with large, fluctuating energy demands, such as skeletal muscle, heart, brain and spermatozoa. Acts as a key regulator of adaptive thermogenesis as part of the futile creatine cycle: localizes to the mitochondria of thermogenic fat cells and acts by mediating phosphorylation of creatine to initiate a futile cycle of creatine phosphorylation and dephosphorylation. During the futile creatine cycle, creatine and N-phosphocreatine are in a futile cycle, which dissipates the high energy charge of N-phosphocreatine as heat without performing any mechanical or chemical work. The chain is Creatine kinase B-type (CKB) from Oryctolagus cuniculus (Rabbit).